Here is a 161-residue protein sequence, read N- to C-terminus: Glycine-rich RNA-binding protein blt801 (161 aa).

The 79-residue stretch at 6-84 (YRCFVGGLRW…RNITVNEAQS (79 aa)) folds into the RRM domain. Positions 72–161 (LDGRNITVNE…GGSGGGNWRE (90 aa)) are disordered. Residue Ser-87 is modified to Phosphoserine; by PKA. Over residues 89–161 (GGGGFGGGGG…GGSGGGNWRE (73 aa)) the composition is skewed to gly residues.

Functionally, binds single-stranded DNA and homoribopolymers of guanine, uracil and adenine, but not cytosine. Also binds RNA, with a preference for RNA containing a high proportion of adenine within an open loop structure. Possibly has a role in RNA transcription or processing during stress. The protein is Glycine-rich RNA-binding protein blt801 of Hordeum vulgare (Barley).